The primary structure comprises 314 residues: Probable RuBisCO transcriptional regulator (314 aa).

The region spanning 6 to 63 (FTLDQLKIIKTIHREGSFKTAAKKLYISQPAVSRQVQNLERQLNTPIFYRDKRKARLT) is the HTH lysR-type domain. Residues 23–42 (FKTAAKKLYISQPAVSRQVQ) constitute a DNA-binding region (H-T-H motif).

Belongs to the LysR transcriptional regulatory family.

The protein localises to the plastid. The protein resides in the chloroplast. Its function is as follows. Trans-acting transcriptional regulator of RuBisCO genes (rbcL and rbcS) expression. This chain is Probable RuBisCO transcriptional regulator (rbcR), found in Emiliania huxleyi (Coccolithophore).